A 377-amino-acid polypeptide reads, in one-letter code: Mechanosensory abnormality protein 6 (377 aa).

At 1 to 13 (MGLQSAAAHFINR) the chain is on the cytoplasmic side. Residues 14-34 (FIIWITIFMVACFLLRLLVVL) traverse the membrane as a helical segment. Over 35 to 377 (DLNKRVYNHT…HCDLTHSYIT (343 aa)) the chain is Extracellular. C48 and C369 are joined by a disulfide. The N-linked (GlcNAc...) asparagine glycan is linked to N94.

The protein belongs to the paraoxonase family. Component of a non-voltage-gated amiloride-sensitive cation channel complex (also called the degenerin channel complex) composed of at least the mec-2, mec-4, mec-6 and mec-10 subunits; the complex mediates mechanotransduction in touch cells. Interacts with mec-2, mec-4 and mec-10. In terms of processing, glycosylated. In terms of tissue distribution, expressed in neurons including the six touch receptors, ventral cord motor neurons, HSN, PVD, PVC, IL1, and several neurons near the nerve ring, in the anal ganglion and in the male tail sensory rays, in muscles including the body wall, vulval, intestinal, anal depressor and sphincter muscles, and in the excretory canal.

The protein resides in the cell membrane. The protein localises to the cell projection. Its subcellular location is the axon. Functionally, subunit of an amiloride-sensitive cation channel (degenerin channel complex) permeable for sodium, potassium, lithium and N-methylglucamine, and required for mechanosensory transduction (touch sensitivity). Interacts with degenerin channel proteins and stabilizes the channel. Plays a role in mechanosensory transduction (touch sensitivity). This is Mechanosensory abnormality protein 6 from Caenorhabditis elegans.